A 1129-amino-acid polypeptide reads, in one-letter code: Ubiquitin carboxyl-terminal hydrolase 15 (1129 aa).

The interval Met-1 to Pro-26 is disordered. Residues Asp-7–Ser-23 show a composition bias toward acidic residues. Residues His-51–Val-204 form the MATH domain. A USP domain is found at Val-230–Lys-545. The Nucleophile role is filled by Cys-239. The active-site Proton acceptor is His-481.

The protein belongs to the peptidase C19 family.

It localises to the nucleus. The enzyme catalyses Thiol-dependent hydrolysis of ester, thioester, amide, peptide and isopeptide bonds formed by the C-terminal Gly of ubiquitin (a 76-residue protein attached to proteins as an intracellular targeting signal).. In terms of biological role, hydrolase that deubiquitinates target proteins. Cleaves the UBL propeptide in sde2. Involved in regulating the steady-state levels of proteins including prp4. This chain is Ubiquitin carboxyl-terminal hydrolase 15, found in Schizosaccharomyces pombe (strain 972 / ATCC 24843) (Fission yeast).